The sequence spans 46 residues: Esculentin-1 (46 aa).

C40 and C46 are oxidised to a cystine.

This sequence belongs to the frog skin active peptide (FSAP) family. Brevinin subfamily. Expressed by the skin glands.

It localises to the secreted. Functionally, shows antibacterial activity against representative Gram-negative and Gram-positive bacterial species, and hemolytic activity. The sequence is that of Esculentin-1 from Pelophylax lessonae (Pool frog).